A 503-amino-acid polypeptide reads, in one-letter code: Probable cytosol aminopeptidase (503 aa).

2 residues coordinate Mn(2+): Lys268 and Asp273. The active site involves Lys280. 3 residues coordinate Mn(2+): Asp291, Asp350, and Glu352. Residue Arg354 is part of the active site.

It belongs to the peptidase M17 family. Mn(2+) serves as cofactor.

The protein localises to the cytoplasm. The catalysed reaction is Release of an N-terminal amino acid, Xaa-|-Yaa-, in which Xaa is preferably Leu, but may be other amino acids including Pro although not Arg or Lys, and Yaa may be Pro. Amino acid amides and methyl esters are also readily hydrolyzed, but rates on arylamides are exceedingly low.. It catalyses the reaction Release of an N-terminal amino acid, preferentially leucine, but not glutamic or aspartic acids.. Functionally, presumably involved in the processing and regular turnover of intracellular proteins. Catalyzes the removal of unsubstituted N-terminal amino acids from various peptides. The sequence is that of Probable cytosol aminopeptidase from Herminiimonas arsenicoxydans.